We begin with the raw amino-acid sequence, 555 residues long: Probable beta-glucosidase btgE (555 aa).

The signal sequence occupies residues 1–18 (MRGAILATAAAFAGTAVA). Disordered regions lie at residues 92–114 (TSSAAPVETPSETPSPTPEVTLP) and 263–290 (TTSAASTTTAVPSSSTTTSSATSVPTGA). A compositionally biased stretch (low complexity) spans 263–288 (TTSAASTTTAVPSSSTTTSSATSVPT). Glutamate 392 (proton donor) is an active-site residue. The active-site Nucleophile is glutamate 488.

This sequence belongs to the glycosyl hydrolase 17 family.

The protein localises to the secreted. The protein resides in the cell wall. The catalysed reaction is Hydrolysis of terminal, non-reducing beta-D-glucosyl residues with release of beta-D-glucose.. Its pathway is glycan metabolism; cellulose degradation. Beta-glucosidases are one of a number of cellulolytic enzymes involved in the degradation of cellulosic biomass. Catalyzes the last step releasing glucose from the inhibitory cellobiose. The protein is Probable beta-glucosidase btgE (btgE) of Emericella nidulans (strain FGSC A4 / ATCC 38163 / CBS 112.46 / NRRL 194 / M139) (Aspergillus nidulans).